A 302-amino-acid polypeptide reads, in one-letter code: MTKFIVNKNDQNQTLFKFLKKTFKTTPISVIYKWIRNKSIKINSKRVNDKNYLLKINDVVEVYDSNKPIIRDQFNYISNVNLDIVYEDNNILIVNKPNNLEMHSIYNLCLDDMVKSYLVDKKEYDIYLENSFVISHVHRLDKLTSGLVIYAKNKISSIILTNAFKTKDQINKYYYALTSYDWNLNDFLQVNGYINYNSNTQKADFSLVEKNNYKYCQTEFKLVNKNLILVKLITGKKHQIRSVLSFYNNPILNDFRYNGKKENDQKMIYLAAFKIEFKSLKKPLDYLNNKVIIKNPDWISRR.

In terms of domain architecture, S4 RNA-binding spans 13–89 (QTLFKFLKKT…VNLDIVYEDN (77 aa)). Asp-141 is an active-site residue.

The protein belongs to the pseudouridine synthase RluA family.

The enzyme catalyses a uridine in RNA = a pseudouridine in RNA. This is an uncharacterized protein from Mycoplasma capricolum subsp. capricolum (strain California kid / ATCC 27343 / NCTC 10154).